Reading from the N-terminus, the 185-residue chain is Ribosome-recycling factor (185 aa).

It belongs to the RRF family.

Its subcellular location is the cytoplasm. Functionally, responsible for the release of ribosomes from messenger RNA at the termination of protein biosynthesis. May increase the efficiency of translation by recycling ribosomes from one round of translation to another. The polypeptide is Ribosome-recycling factor (Aeromonas hydrophila subsp. hydrophila (strain ATCC 7966 / DSM 30187 / BCRC 13018 / CCUG 14551 / JCM 1027 / KCTC 2358 / NCIMB 9240 / NCTC 8049)).